The chain runs to 299 residues: Mitochondrial magnesium exporter 1 (299 aa).

Solcar repeat units follow at residues S12–L103, L112–L200, and I210–L296. The next 4 helical transmembrane spans lie at I79–A99, Y114–P134, I216–L236, and I272–L292.

This sequence belongs to the mitochondrial carrier (TC 2.A.29) family.

It is found in the mitochondrion membrane. Functionally, mediates efflux of magnesium ions from mitochondria, suggesting a role in magnesium homeostasis. The sequence is that of Mitochondrial magnesium exporter 1 from Drosophila melanogaster (Fruit fly).